Reading from the N-terminus, the 223-residue chain is Ribose-5-phosphate isomerase A (223 aa).

Residues 28 to 31 (TGST), 81 to 84 (DGTD), and 94 to 97 (KGGG) each bind substrate. Glutamate 103 (proton acceptor) is an active-site residue. Lysine 121 serves as a coordination point for substrate.

The protein belongs to the ribose 5-phosphate isomerase family. As to quaternary structure, homodimer.

It catalyses the reaction aldehydo-D-ribose 5-phosphate = D-ribulose 5-phosphate. It participates in carbohydrate degradation; pentose phosphate pathway; D-ribose 5-phosphate from D-ribulose 5-phosphate (non-oxidative stage): step 1/1. Its function is as follows. Catalyzes the reversible conversion of ribose-5-phosphate to ribulose 5-phosphate. The polypeptide is Ribose-5-phosphate isomerase A (Baumannia cicadellinicola subsp. Homalodisca coagulata).